We begin with the raw amino-acid sequence, 446 residues long: F-box/LRR-repeat protein At4g29420 (446 aa).

One can recognise an F-box domain in the interval 1 to 51 (MDELPPELWIKILSRINDSESLARCRVASKTLNSLSREVRAVNLICTWSRY). 8 LRR repeats span residues 59-84 (VVTP…SVGV), 103-130 (DLYL…SISD), 135-160 (SCWR…EVKN), 181-206 (FIRL…NLIG), 223-248 (CHWT…KLKC), 265-289 (HLSV…ELVS), 318-343 (QSER…SLSP), and 382-407 (NVHQ…RLMI).

This Arabidopsis thaliana (Mouse-ear cress) protein is F-box/LRR-repeat protein At4g29420.